Here is a 418-residue protein sequence, read N- to C-terminus: Gamma-glutamyl phosphate reductase (418 aa).

It belongs to the gamma-glutamyl phosphate reductase family.

Its subcellular location is the cytoplasm. It carries out the reaction L-glutamate 5-semialdehyde + phosphate + NADP(+) = L-glutamyl 5-phosphate + NADPH + H(+). It participates in amino-acid biosynthesis; L-proline biosynthesis; L-glutamate 5-semialdehyde from L-glutamate: step 2/2. In terms of biological role, catalyzes the NADPH-dependent reduction of L-glutamate 5-phosphate into L-glutamate 5-semialdehyde and phosphate. The product spontaneously undergoes cyclization to form 1-pyrroline-5-carboxylate. The sequence is that of Gamma-glutamyl phosphate reductase from Marinobacter nauticus (strain ATCC 700491 / DSM 11845 / VT8) (Marinobacter aquaeolei).